The primary structure comprises 61 residues: Small ribosomal subunit protein uS14 (61 aa).

Zn(2+)-binding residues include Cys24, Cys27, Cys40, and Cys43.

It belongs to the universal ribosomal protein uS14 family. Zinc-binding uS14 subfamily. As to quaternary structure, part of the 30S ribosomal subunit. Contacts proteins S3 and S10. Zn(2+) serves as cofactor.

Functionally, binds 16S rRNA, required for the assembly of 30S particles and may also be responsible for determining the conformation of the 16S rRNA at the A site. This Streptococcus thermophilus (strain CNRZ 1066) protein is Small ribosomal subunit protein uS14.